The primary structure comprises 370 residues: Chloromuconate cycloisomerase (370 aa).

Lysine 165 serves as the catalytic Proton acceptor. Residues aspartate 194, glutamate 220, and aspartate 245 each coordinate Mn(2+). Glutamate 323 functions as the Proton donor in the catalytic mechanism.

It belongs to the mandelate racemase/muconate lactonizing enzyme family. Mn(2+) is required as a cofactor.

The catalysed reaction is 2-[(2R)-2-chloro-2,5-dihydro-5-oxofuryl]acetate = 3-chloro-cis,cis-muconate + H(+). The protein operates within aromatic compound metabolism; 3-chlorocatechol degradation. Highly active toward chlorinated substrates but retains diminished activity toward the non-chlorinated substrates. The protein is Chloromuconate cycloisomerase (clcB) of Pseudomonas putida (Arthrobacter siderocapsulatus).